Here is a 134-residue protein sequence, read N- to C-terminus: Peptide methionine sulfoxide reductase MsrB (134 aa).

Positions 9 to 131 (DEYWRDKLDA…NSASIQLQKE (123 aa)) constitute a MsrB domain. Zn(2+) is bound by residues Cys-48, Cys-51, Cys-97, and Cys-100. Cys-120 functions as the Nucleophile in the catalytic mechanism.

This sequence belongs to the MsrB Met sulfoxide reductase family. Zn(2+) serves as cofactor.

It catalyses the reaction L-methionyl-[protein] + [thioredoxin]-disulfide + H2O = L-methionyl-(R)-S-oxide-[protein] + [thioredoxin]-dithiol. This Saccharophagus degradans (strain 2-40 / ATCC 43961 / DSM 17024) protein is Peptide methionine sulfoxide reductase MsrB.